The chain runs to 537 residues: ATPase expression protein 2, mitochondrial (537 aa).

It belongs to the AEP2 family. In terms of assembly, binds to the 5'UTR of the OLI1 mRNA.

The protein localises to the mitochondrion. Functionally, required for translation of the mitochondrial OLI1 transcript coding for the mitochondrial ATP synthase subunit 9. The protein is ATPase expression protein 2, mitochondrial (AEP2) of Eremothecium gossypii (strain ATCC 10895 / CBS 109.51 / FGSC 9923 / NRRL Y-1056) (Yeast).